Here is a 278-residue protein sequence, read N- to C-terminus: UPF0758 protein BURPS668_0979 (278 aa).

The segment at 1 to 64 is disordered; that stretch reads MQYEIVSAGE…ATAAARRGRD (64 aa). Low complexity predominate over residues 22–59; the sequence is AAAPAAPSSAVPSSAALSSAALSSAARPTGAPPATAAA. An MPN domain is found at 156 to 278; that stretch reads LVDSPGAVDD…TFSFAQAGWI (123 aa). Zn(2+) contacts are provided by histidine 227, histidine 229, and aspartate 240. The JAMM motif motif lies at 227–240; it reads HNHPSGAVRPSAAD.

It belongs to the UPF0758 family.

The sequence is that of UPF0758 protein BURPS668_0979 from Burkholderia pseudomallei (strain 668).